A 687-amino-acid polypeptide reads, in one-letter code: MMTQTLLIELLTEELPPKALNNLGNHFAAAVAEGLEKAQLVDGAAEFTAYASPRRLAVQVKNVKAVQADQKIVKKGPAVANAMKDGAPTKALEGFARGAGAKIEDLTIVHDGKQDVYAYEYVQTGKPLGELLEDIINAAVKKLPIPKVMRWGSSTFTFVRPVHGLVVLHGGDIVNVSVLGLQSSNQTLGHRFLSNGEITIENADSYAAQMREQGKVVASFAERKAAIQTALEGQARRLNASVAADEALLDEVTALVEWPVVLEAGFEEHFLAVPQECLILTMQQNQKYFPLLDQNGKLMNRFLLVSNLQTEDPSHIIRGNERVLRARLSDAEFFYKQDQKATLESRLPKLSSVVYHNKIGSQAERIERLQSIAAHIAKALGADAAAAERAARLAKADLVTEMVGEFPELQGTMGKYYARLDGETEEIAEAVEQHYQPRFAGDNLPNGKVATAVALADKLETLVGIWGIGLIPTGDKDPYALRRAALGILRMLMQYGLDVNELIQTAFDSFPKGLLNEKTPSETADFMQARLAVLLQNDYPQDIVAAVLAKQPRRLDDVVAKLQAVAAFKQLPEAAALAAANKRVQNLLKKADAALGEVNESLLQQDEEKALFAAAQGLQPKIAAAVAEGNFQTALSELASVKPQVDAFFDGVMVMAEDAAVKQNRLNLLNRLAEQMNAVADIALLGE.

It belongs to the class-II aminoacyl-tRNA synthetase family. Tetramer of two alpha and two beta subunits.

The protein resides in the cytoplasm. It catalyses the reaction tRNA(Gly) + glycine + ATP = glycyl-tRNA(Gly) + AMP + diphosphate. This Neisseria meningitidis serogroup C (strain 053442) protein is Glycine--tRNA ligase beta subunit.